A 125-amino-acid polypeptide reads, in one-letter code: Oxytocin-neurophysin 1 (125 aa).

The signal sequence occupies residues 1–19 (MAGPSLACCLLGLLALTSA). A disulfide bridge connects residues Cys20 and Cys25. Gly28 is modified (glycine amide). 7 cysteine pairs are disulfide-bonded: Cys41–Cys85, Cys44–Cys58, Cys52–Cys75, Cys59–Cys65, Cys92–Cys104, Cys98–Cys116, and Cys105–Cys110.

The protein belongs to the vasopressin/oxytocin family. As to quaternary structure, interacts with oxytocin receptor (Ki=1.5 nM). Interacts with vasopressin V1aR/AVPR1A (Ki=37 nM), V1bR/AVPR1B (Ki=222 nM) and V2R/AVPR2 receptors (Ki=823 nM).

The protein resides in the secreted. Its function is as follows. Neurophysin 1 specifically binds oxytocin. In terms of biological role, oxytocin causes contraction of the smooth muscle of the uterus and of the mammary gland. Acts by binding to oxytocin receptor (OXTR). In Homo sapiens (Human), this protein is Oxytocin-neurophysin 1 (OXT).